A 437-amino-acid polypeptide reads, in one-letter code: Serine carboxypeptidase-like 7 (437 aa).

The first 25 residues, 1–25, serve as a signal peptide directing secretion; the sequence is MANDYVSTVLLLLSLLIFLSQRTDS. Cystine bridges form between cysteine 84/cysteine 327, cysteine 248/cysteine 262, and cysteine 286/cysteine 293. The N-linked (GlcNAc...) asparagine glycan is linked to asparagine 105. Serine 180 is a catalytic residue. Asparagine 346 is a glycosylation site (N-linked (GlcNAc...) asparagine). Aspartate 362 is an active-site residue. N-linked (GlcNAc...) asparagine glycosylation is present at asparagine 378. The active site involves histidine 415.

Belongs to the peptidase S10 family. Ubiquitous.

It is found in the secreted. Its function is as follows. Probable carboxypeptidase. This is Serine carboxypeptidase-like 7 (SCPL7) from Arabidopsis thaliana (Mouse-ear cress).